Consider the following 518-residue polypeptide: OTU domain-containing protein 5 (518 aa).

Disordered stretches follow at residues 1-79 (MTIL…SGGA) and 105-144 (PGHS…ETAA). Over residues 39 to 53 (SSPPPRWAYPGNPAP) the composition is skewed to pro residues. Residues 116–125 (SAGPGAPGSS) are compositionally biased toward low complexity. The OTU domain maps to 171 to 294 (FIIKQMKEDG…NIHYNSVVNP (124 aa)). A cys-loop region spans residues 176 to 182 (MKEDGAC). The active site involves aspartate 179. Residue cysteine 182 is the Nucleophile of the active site. Residues 231 to 241 (KRKNNCHGNHI) are variable-loop. The segment at 282-287 (YHRNIH) is his-loop. Histidine 287 is an active-site residue. Positions 371–450 (ARQPRKASAT…GPSNQTCAGA (80 aa)) are disordered. Residues 377-390 (ASATCSSATAAASS) show a composition bias toward low complexity.

Belongs to the peptidase C85 family.

The catalysed reaction is Thiol-dependent hydrolysis of ester, thioester, amide, peptide and isopeptide bonds formed by the C-terminal Gly of ubiquitin (a 76-residue protein attached to proteins as an intracellular targeting signal).. In terms of biological role, deubiquitinating enzyme that may function as negative regulator of the innate immune system. Has peptidase activity towards 'Lys-48'- and 'Lys-63'-linked polyubiquitin chains. Can also cleave 'Lys-11'-linked ubiquitin chains (in vitro). In Xenopus tropicalis (Western clawed frog), this protein is OTU domain-containing protein 5 (otud5).